Here is a 618-residue protein sequence, read N- to C-terminus: 1-deoxy-D-xylulose-5-phosphate synthase (618 aa).

Residues His-72 and 113–115 each bind thiamine diphosphate; that span reads GHA. Asp-144 is a Mg(2+) binding site. Residues 145-146, Asn-173, His-284, and Glu-359 contribute to the thiamine diphosphate site; that span reads GA. Mg(2+) is bound at residue Asn-173.

It belongs to the transketolase family. DXPS subfamily. In terms of assembly, homodimer. Requires Mg(2+) as cofactor. Thiamine diphosphate is required as a cofactor.

It carries out the reaction D-glyceraldehyde 3-phosphate + pyruvate + H(+) = 1-deoxy-D-xylulose 5-phosphate + CO2. Its pathway is metabolic intermediate biosynthesis; 1-deoxy-D-xylulose 5-phosphate biosynthesis; 1-deoxy-D-xylulose 5-phosphate from D-glyceraldehyde 3-phosphate and pyruvate: step 1/1. In terms of biological role, catalyzes the acyloin condensation reaction between C atoms 2 and 3 of pyruvate and glyceraldehyde 3-phosphate to yield 1-deoxy-D-xylulose-5-phosphate (DXP). This chain is 1-deoxy-D-xylulose-5-phosphate synthase, found in Dictyoglomus thermophilum (strain ATCC 35947 / DSM 3960 / H-6-12).